The primary structure comprises 168 residues: Phosphopantetheine adenylyltransferase (168 aa).

T10 contacts substrate. Residues 10–11 (TF) and H18 contribute to the ATP site. K42, L75, and R89 together coordinate substrate. ATP is bound by residues 90 to 92 (GVR), E100, and 125 to 131 (YTYVASS).

Belongs to the bacterial CoaD family. As to quaternary structure, homohexamer. Mg(2+) is required as a cofactor.

The protein localises to the cytoplasm. The enzyme catalyses (R)-4'-phosphopantetheine + ATP + H(+) = 3'-dephospho-CoA + diphosphate. It participates in cofactor biosynthesis; coenzyme A biosynthesis; CoA from (R)-pantothenate: step 4/5. Reversibly transfers an adenylyl group from ATP to 4'-phosphopantetheine, yielding dephospho-CoA (dPCoA) and pyrophosphate. The protein is Phosphopantetheine adenylyltransferase of Prosthecochloris aestuarii (strain DSM 271 / SK 413).